A 106-amino-acid polypeptide reads, in one-letter code: uncharacterized protein (106 aa).

Positions Arg-54 to Lys-106 are disordered. The segment covering Ser-84–Ser-94 has biased composition (low complexity).

This is an uncharacterized protein from Human adenovirus C serotype 2 (HAdV-2).